Reading from the N-terminus, the 423-residue chain is 26S proteasome regulatory subunit 6B homolog (423 aa).

Glycine 207 to threonine 214 contributes to the ATP binding site.

This sequence belongs to the AAA ATPase family.

It localises to the cytoplasm. Its subcellular location is the nucleus. Its function is as follows. The 26S proteasome is involved in the ATP-dependent degradation of ubiquitinated proteins. The regulatory (or ATPase) complex confers ATP dependency and substrate specificity to the 26S complex. This Aspergillus niger protein is 26S proteasome regulatory subunit 6B homolog (tbpA).